Reading from the N-terminus, the 227-residue chain is Uracil-DNA glycosylase (227 aa).

D68 (proton acceptor) is an active-site residue.

It belongs to the uracil-DNA glycosylase (UDG) superfamily. UNG family.

It is found in the cytoplasm. The catalysed reaction is Hydrolyzes single-stranded DNA or mismatched double-stranded DNA and polynucleotides, releasing free uracil.. Functionally, excises uracil residues from the DNA which can arise as a result of misincorporation of dUMP residues by DNA polymerase or due to deamination of cytosine. The sequence is that of Uracil-DNA glycosylase from Mycobacterium avium (strain 104).